The primary structure comprises 60 residues: Cytotoxin SP15a (60 aa).

Cystine bridges form between cysteine 3-cysteine 21, cysteine 14-cysteine 38, cysteine 42-cysteine 53, and cysteine 54-cysteine 59.

It belongs to the three-finger toxin family. Short-chain subfamily. Type IA cytotoxin sub-subfamily. As to quaternary structure, monomer in solution; Homodimer and oligomer in the presence of negatively charged lipids forming a pore with a size ranging between 20 and 30 Angstroms. As to expression, expressed by the venom gland.

It is found in the secreted. It localises to the target cell membrane. Functionally, shows cytolytic activity on many different cells by forming pore in lipid membranes. In vivo, increases heart rate or kills the animal by cardiac arrest. In addition, it binds to heparin with high affinity, interacts with Kv channel-interacting protein 1 (KCNIP1) in a calcium-independent manner, and binds to integrin alpha-V/beta-3 (ITGAV/ITGB3) with moderate affinity. In Naja atra (Chinese cobra), this protein is Cytotoxin SP15a.